The sequence spans 145 residues: 3-dehydroquinate dehydratase (145 aa).

Tyrosine 24 functions as the Proton acceptor in the catalytic mechanism. Substrate-binding residues include asparagine 76, histidine 82, and aspartate 89. Histidine 102 serves as the catalytic Proton donor. Substrate-binding positions include 103 to 104 and arginine 113; that span reads LS.

It belongs to the type-II 3-dehydroquinase family. Homododecamer.

It catalyses the reaction 3-dehydroquinate = 3-dehydroshikimate + H2O. It functions in the pathway metabolic intermediate biosynthesis; chorismate biosynthesis; chorismate from D-erythrose 4-phosphate and phosphoenolpyruvate: step 3/7. Catalyzes a trans-dehydration via an enolate intermediate. The chain is 3-dehydroquinate dehydratase from Nitrosomonas eutropha (strain DSM 101675 / C91 / Nm57).